A 238-amino-acid polypeptide reads, in one-letter code: Valine-rich protein (238 aa).

Positions 1–16 are cleaved as a signal peptide; sequence MQAVLLVVALFGAALA.

Prismatic layer of shell (at protein level). Expressed primarily in the mantle with highest level in the mantle edge and lower level in the mantle pallium.

Its subcellular location is the secreted. This Margaritifera margaritifera (Freshwater pearl mussel) protein is Valine-rich protein.